The sequence spans 115 residues: Succinate dehydrogenase assembly factor 3, mitochondrial (115 aa).

The protein belongs to the complex I LYR family. SDHAF3 subfamily. Interacts with sdh2 within an sdh1-sdh2 subcomplex.

The protein resides in the mitochondrion matrix. Its function is as follows. Plays an essential role in the assembly of succinate dehydrogenase (SDH), an enzyme complex (also referred to as respiratory complex II) that is a component of both the tricarboxylic acid (TCA) cycle and the mitochondrial electron transport chain, and which couples the oxidation of succinate to fumarate with the reduction of ubiquinone (coenzyme Q) to ubiquinol. Promotes maturation of the iron-sulfur protein subunit sdh2 of the SDH catalytic dimer, protecting it from the deleterious effects of oxidants. May act together with SDHAF1. The chain is Succinate dehydrogenase assembly factor 3, mitochondrial from Schizosaccharomyces pombe (strain 972 / ATCC 24843) (Fission yeast).